A 194-amino-acid chain; its full sequence is Inosine triphosphate pyrophosphatase (194 aa).

An N-acetylalanine modification is found at alanine 2. 14 to 19 is an ITP binding site; it reads TGNAKK. Residue glutamate 44 participates in Mg(2+) binding. Residues lysine 56, 72–73, lysine 89, 149–152, lysine 172, and 177–178 each bind ITP; these read DT, FGWD, and HR.

It belongs to the HAM1 NTPase family. As to quaternary structure, homodimer. Requires Mg(2+) as cofactor. As to expression, ubiquitous. Highly expressed in heart, liver, sex glands, thyroid and adrenal gland.

The protein resides in the cytoplasm. The enzyme catalyses ITP + H2O = IMP + diphosphate + H(+). It catalyses the reaction dITP + H2O = dIMP + diphosphate + H(+). It carries out the reaction XTP + H2O = XMP + diphosphate + H(+). The catalysed reaction is N(6)-hydroxy-dATP + H2O = N(6)-hydroxy-dAMP + diphosphate + H(+). Pyrophosphatase that hydrolyzes the non-canonical purine nucleotides inosine triphosphate (ITP), deoxyinosine triphosphate (dITP) as well as 2'-deoxy-N-6-hydroxylaminopurine triphosphate (dHAPTP) and xanthosine 5'-triphosphate (XTP) to their respective monophosphate derivatives. The enzyme does not distinguish between the deoxy- and ribose forms. Probably excludes non-canonical purines from RNA and DNA precursor pools, thus preventing their incorporation into RNA and DNA and avoiding chromosomal lesions. The chain is Inosine triphosphate pyrophosphatase from Homo sapiens (Human).